Consider the following 235-residue polypeptide: Sugar fermentation stimulation protein homolog (235 aa).

This sequence belongs to the SfsA family.

The polypeptide is Sugar fermentation stimulation protein homolog (Pseudomonas aeruginosa (strain LESB58)).